The following is a 215-amino-acid chain: Ras-related protein Rab-14 (215 aa).

Alanine 2 bears the N-acetylalanine mark. GTP-binding residues include glycine 21, valine 22, glycine 23, lysine 24, serine 25, cysteine 26, alanine 38, aspartate 39, cysteine 40, histidine 42, and threonine 43. Serine 25 provides a ligand contact to Mg(2+). Residues 42–47 (HTIGVE) carry the Switch 1 motif. Mg(2+) is bound by residues threonine 43 and aspartate 66. The short motif at 68-77 (AGQERFRAVT) is the Switch 2 element. GTP is bound by residues glycine 69, asparagine 124, lysine 125, aspartate 127, alanine 155, and lysine 156. Residues 188 to 215 (SGVQHKPSAPQGGRLTSEPQPQREGCGC) form a disordered region. Residues cysteine 213 and cysteine 215 are each lipidated (S-geranylgeranyl cysteine). Cysteine methyl ester is present on cysteine 215.

It belongs to the small GTPase superfamily. Rab family. As to quaternary structure, interacts with ZFYVE20. Interacts with KIF16B. Interacts (GTP-bound form) with RUFY1; the interaction recruits RUFY1 onto endosomal membranes. Interacts (GTP-bound form) with RAB11FIP1 (via its C-terminus); the interactions doesn't mediate RAB11FIP1 rectruitment to membranes. Interacts with RAB11FIP2. Mg(2+) serves as cofactor.

It is found in the recycling endosome. Its subcellular location is the early endosome membrane. It localises to the golgi apparatus membrane. The protein localises to the golgi apparatus. The protein resides in the trans-Golgi network membrane. It is found in the cytoplasmic vesicle. Its subcellular location is the phagosome. The enzyme catalyses GTP + H2O = GDP + phosphate + H(+). Its activity is regulated as follows. Regulated by guanine nucleotide exchange factors (GEFs) including DENND6A and DENND6B which promote the exchange of bound GDP for free GTP. Regulated by GTPase activating proteins (GAPs) which increase the GTP hydrolysis activity. Inhibited by GDP dissociation inhibitors (GDIs) which prevent Rab-GDP dissociation. The small GTPases Rab are key regulators of intracellular membrane trafficking, from the formation of transport vesicles to their fusion with membranes. Rabs cycle between an inactive GDP-bound form and an active GTP-bound form that is able to recruit to membranes different set of downstream effectors directly responsible for vesicle formation, movement, tethering and fusion. Involved in membrane trafficking between the Golgi complex and endosomes during early embryonic development. Regulates the Golgi to endosome transport of FGFR-containing vesicles during early development, a key process for developing basement membrane and epiblast and primitive endoderm lineages during early postimplantation development. May act by modulating the kinesin KIF16B-cargo association to endosomes. Regulates, together with its guanine nucleotide exchange factor DENND6A, the specific endocytic transport of ADAM10, N-cadherin/CDH2 shedding and cell-cell adhesion. Mediates endosomal tethering and fusion through the interaction with RUFY1 and RAB4B. Interaction with RAB11FIP1 may function in the process of neurite formation. This is Ras-related protein Rab-14 (RAB14) from Sus scrofa (Pig).